Consider the following 171-residue polypeptide: Transcription factor E (171 aa).

Residues 1-81 form the HTH TFE/IIEalpha-type domain; that stretch reads MLNLAKELVG…YWKVNVNQIN (81 aa).

Belongs to the TFE family. As to quaternary structure, monomer. Interaction with RNA polymerase subunits RpoF and RpoE is necessary for Tfe stimulatory transcription activity. Able to interact with Tbp and RNA polymerase in the absence of DNA promoter. Interacts both with the preinitiation and elongation complexes.

Its function is as follows. Transcription factor that plays a role in the activation of archaeal genes transcribed by RNA polymerase. Facilitates transcription initiation by enhancing TATA-box recognition by TATA-box-binding protein (Tbp), and transcription factor B (Tfb) and RNA polymerase recruitment. Not absolutely required for transcription in vitro, but particularly important in cases where Tbp or Tfb function is not optimal. It dynamically alters the nucleic acid-binding properties of RNA polymerases by stabilizing the initiation complex and destabilizing elongation complexes. Seems to translocate with the RNA polymerase following initiation and acts by binding to the non template strand of the transcription bubble in elongation complexes. In Sulfolobus acidocaldarius (strain ATCC 33909 / DSM 639 / JCM 8929 / NBRC 15157 / NCIMB 11770), this protein is Transcription factor E.